A 503-amino-acid chain; its full sequence is uncharacterized protein (503 aa).

Basic and acidic residues-rich tracts occupy residues 1-23 (MAHEGPRQVRDRGMTRSKAEKVR) and 203-215 (PLEKLGDQSRSDQ). 2 disordered regions span residues 1–29 (MAHEGPRQVRDRGMTRSKAEKVRPPTVPV) and 149–227 (ETFQ…SNSS). Phosphoserine occurs at positions 239 and 243. Disordered regions lie at residues 346–370 (LDPARLPRPDMARSPSPKLWPGAKW) and 450–475 (LLSSSEPQRNDREGSASPPIHTGAPK). The segment covering 347–356 (DPARLPRPDM) has biased composition (basic and acidic residues).

This is an uncharacterized protein from Bos taurus (Bovine).